Here is a 406-residue protein sequence, read N- to C-terminus: Tryptophan synthase beta chain (406 aa).

Lys99 bears the N6-(pyridoxal phosphate)lysine mark.

This sequence belongs to the TrpB family. Tetramer of two alpha and two beta chains. Requires pyridoxal 5'-phosphate as cofactor.

It carries out the reaction (1S,2R)-1-C-(indol-3-yl)glycerol 3-phosphate + L-serine = D-glyceraldehyde 3-phosphate + L-tryptophan + H2O. The protein operates within amino-acid biosynthesis; L-tryptophan biosynthesis; L-tryptophan from chorismate: step 5/5. In terms of biological role, the beta subunit is responsible for the synthesis of L-tryptophan from indole and L-serine. The sequence is that of Tryptophan synthase beta chain (trpB) from Agrobacterium fabrum (strain C58 / ATCC 33970) (Agrobacterium tumefaciens (strain C58)).